The following is a 55-amino-acid chain: MAKAVTIKVKLVSSADTGFYYVAKKNSRTMTDKMVKKKYDPVARKHVEFREAKIK.

Belongs to the bacterial ribosomal protein bL33 family.

The sequence is that of Large ribosomal subunit protein bL33 (rpmG) from Nitrobacter hamburgensis (strain DSM 10229 / NCIMB 13809 / X14).